Reading from the N-terminus, the 246-residue chain is Pyridoxine 5'-phosphate synthase (246 aa).

Asn12 contacts 3-amino-2-oxopropyl phosphate. 14-15 serves as a coordination point for 1-deoxy-D-xylulose 5-phosphate; it reads DH. Arg23 serves as a coordination point for 3-amino-2-oxopropyl phosphate. The active-site Proton acceptor is the His48. Arg50 and His55 together coordinate 1-deoxy-D-xylulose 5-phosphate. Glu75 functions as the Proton acceptor in the catalytic mechanism. Thr105 contacts 1-deoxy-D-xylulose 5-phosphate. The active-site Proton donor is His196. 3-amino-2-oxopropyl phosphate-binding positions include Gly197 and 218–219; that span reads GH.

The protein belongs to the PNP synthase family. In terms of assembly, homooctamer; tetramer of dimers.

The protein resides in the cytoplasm. It carries out the reaction 3-amino-2-oxopropyl phosphate + 1-deoxy-D-xylulose 5-phosphate = pyridoxine 5'-phosphate + phosphate + 2 H2O + H(+). Its pathway is cofactor biosynthesis; pyridoxine 5'-phosphate biosynthesis; pyridoxine 5'-phosphate from D-erythrose 4-phosphate: step 5/5. In terms of biological role, catalyzes the complicated ring closure reaction between the two acyclic compounds 1-deoxy-D-xylulose-5-phosphate (DXP) and 3-amino-2-oxopropyl phosphate (1-amino-acetone-3-phosphate or AAP) to form pyridoxine 5'-phosphate (PNP) and inorganic phosphate. The chain is Pyridoxine 5'-phosphate synthase from Pseudomonas putida (strain ATCC 47054 / DSM 6125 / CFBP 8728 / NCIMB 11950 / KT2440).